The chain runs to 175 residues: Ribosome maturation factor RimM (175 aa).

A PRC barrel domain is found at 95–175 (SEDEFYWREL…RIEVDWDPGF (81 aa)).

The protein belongs to the RimM family. Binds ribosomal protein uS19.

It localises to the cytoplasm. In terms of biological role, an accessory protein needed during the final step in the assembly of 30S ribosomal subunit, possibly for assembly of the head region. Essential for efficient processing of 16S rRNA. May be needed both before and after RbfA during the maturation of 16S rRNA. It has affinity for free ribosomal 30S subunits but not for 70S ribosomes. The polypeptide is Ribosome maturation factor RimM (Aliivibrio fischeri (strain MJ11) (Vibrio fischeri)).